A 691-amino-acid polypeptide reads, in one-letter code: Protein-glutamine gamma-glutamyltransferase E (691 aa).

Position 110 is a phosphotyrosine (Tyr110). Thr111 carries the phosphothreonine modification. The Ca(2+) site is built by Ala221, Asn224, Asn226, and Asp227. Cys272 is a catalytic residue. Asp301, Asp303, Asn305, Ser307, and Asp324 together coordinate Ca(2+). Residues His330 and Asp353 contribute to the active site. Residues Asn393, Thr414, Glu442, and Glu447 each coordinate Ca(2+).

Belongs to the transglutaminase superfamily. Transglutaminase family. Consists of two polypeptide chains, which are synthesized as a precursor form of a single polypeptide. Requires Ca(2+) as cofactor. In terms of processing, activated by proteolytic processing. In vitro activation is commonly achieved by cleavage with dispase, a neutral bacterial protease. Physiological activation may be catalyzed by CTSL and, to a lesser extent, by CTSS.

The protein localises to the cytoplasm. The catalysed reaction is L-glutaminyl-[protein] + L-lysyl-[protein] = [protein]-L-lysyl-N(6)-5-L-glutamyl-[protein] + NH4(+). Its function is as follows. Catalyzes the calcium-dependent formation of isopeptide cross-links between glutamine and lysine residues in various proteins, as well as the conjugation of polyamines to proteins. Involved in the formation of the cornified envelope (CE), a specialized component consisting of covalent cross-links of proteins beneath the plasma membrane of terminally differentiated keratinocytes. Catalyzes small proline-rich proteins and LOR cross-linking to form small interchain oligomers, which are further cross-linked by TGM1 onto the growing CE scaffold. In hair follicles, involved in cross-linking structural proteins to hardening the inner root sheath. The polypeptide is Protein-glutamine gamma-glutamyltransferase E (TGM3) (Bos taurus (Bovine)).